Consider the following 214-residue polypeptide: Thymidylate kinase (214 aa).

10 to 17 (GGEGAGKS) is an ATP binding site.

This sequence belongs to the thymidylate kinase family.

The enzyme catalyses dTMP + ATP = dTDP + ADP. Its function is as follows. Phosphorylation of dTMP to form dTDP in both de novo and salvage pathways of dTTP synthesis. In Brucella canis (strain ATCC 23365 / NCTC 10854 / RM-666), this protein is Thymidylate kinase.